A 156-amino-acid polypeptide reads, in one-letter code: Small ribosomal subunit protein uS7 (156 aa).

It belongs to the universal ribosomal protein uS7 family. Part of the 30S ribosomal subunit. Contacts proteins S9 and S11.

Functionally, one of the primary rRNA binding proteins, it binds directly to 16S rRNA where it nucleates assembly of the head domain of the 30S subunit. Is located at the subunit interface close to the decoding center, probably blocks exit of the E-site tRNA. The protein is Small ribosomal subunit protein uS7 of Streptococcus mutans serotype c (strain ATCC 700610 / UA159).